Here is a 154-residue protein sequence, read N- to C-terminus: Protein X (154 aa).

The mitochondrial targeting sequence stretch occupies residues 68–117 (PCALRFTSARCMETTVNAHQILPKVLHKRTLGLPAMSTTDLEAYFKDCVF).

This sequence belongs to the orthohepadnavirus protein X family. May form homodimer. May interact with host CEBPA, CFLAR, CREB1, DDB1, E4F1, HBXIP, HSPD1/HSP60, NFKBIA, POLR2E and SMAD4. Interacts with host SMC5-SMC6 complex and induces its degradation. Interacts with host TRPC4AP; leading to prevent ubiquitination of TRPC4AP. Interacts with host PLSCR1; this interaction promotes ubiquitination and degradation of HBx and impairs HBx-mediated cell proliferation. A fraction may be phosphorylated in insect cells and HepG2 cells, a human hepatoblastoma cell line. Phosphorylated in vitro by host protein kinase C or mitogen-activated protein kinase. N-acetylated in insect cells.

Its subcellular location is the host cytoplasm. The protein localises to the host nucleus. The protein resides in the host mitochondrion. Its function is as follows. Multifunctional protein that plays a role in silencing host antiviral defenses and promoting viral transcription. Does not seem to be essential for HBV infection. May be directly involved in development of cirrhosis and liver cancer (hepatocellular carcinoma). Most of cytosolic activities involve modulation of cytosolic calcium. The effect on apoptosis is controversial depending on the cell types in which the studies have been conducted. May induce apoptosis by localizing in mitochondria and causing loss of mitochondrial membrane potential. May also modulate apoptosis by binding host CFLAR, a key regulator of the death-inducing signaling complex (DISC). Promotes viral transcription by using the host E3 ubiquitin ligase DDB1 to target the SMC5-SMC6 complex to proteasomal degradation. This host complex would otherwise bind to viral episomal DNA, and prevents its transcription. Moderately stimulates transcription of many different viral and cellular transcription elements. Promoters and enhancers stimulated by HBx contain DNA binding sites for NF-kappa-B, AP-1, AP-2, c-EBP, ATF/CREB, or the calcium-activated factor NF-AT. In Hepatitis B virus genotype A2 subtype adw2 (strain Rutter 1979) (HBV-A), this protein is Protein X.